We begin with the raw amino-acid sequence, 338 residues long: tRNA N6-adenosine threonylcarbamoyltransferase (338 aa).

The Fe cation site is built by His-111 and His-115. Substrate contacts are provided by residues 134-138, Asp-167, Gly-180, and Asn-272; that span reads LVSGG. Asp-300 contributes to the Fe cation binding site.

It belongs to the KAE1 / TsaD family. Fe(2+) serves as cofactor.

It is found in the cytoplasm. The enzyme catalyses L-threonylcarbamoyladenylate + adenosine(37) in tRNA = N(6)-L-threonylcarbamoyladenosine(37) in tRNA + AMP + H(+). Required for the formation of a threonylcarbamoyl group on adenosine at position 37 (t(6)A37) in tRNAs that read codons beginning with adenine. Is involved in the transfer of the threonylcarbamoyl moiety of threonylcarbamoyl-AMP (TC-AMP) to the N6 group of A37, together with TsaE and TsaB. TsaD likely plays a direct catalytic role in this reaction. In Shewanella halifaxensis (strain HAW-EB4), this protein is tRNA N6-adenosine threonylcarbamoyltransferase.